A 404-amino-acid polypeptide reads, in one-letter code: Imidazolonepropionase (404 aa).

Fe(3+) is bound by residues H73 and H75. H73 and H75 together coordinate Zn(2+). The 4-imidazolone-5-propanoate site is built by R82, Y145, and H178. Y145 contacts N-formimidoyl-L-glutamate. H243 provides a ligand contact to Fe(3+). H243 is a binding site for Zn(2+). Q246 serves as a coordination point for 4-imidazolone-5-propanoate. D318 serves as a coordination point for Fe(3+). Zn(2+) is bound at residue D318. Positions 320 and 322 each coordinate N-formimidoyl-L-glutamate. S323 is a 4-imidazolone-5-propanoate binding site.

The protein belongs to the metallo-dependent hydrolases superfamily. HutI family. Zn(2+) is required as a cofactor. The cofactor is Fe(3+).

It is found in the cytoplasm. The enzyme catalyses 4-imidazolone-5-propanoate + H2O = N-formimidoyl-L-glutamate. It participates in amino-acid degradation; L-histidine degradation into L-glutamate; N-formimidoyl-L-glutamate from L-histidine: step 3/3. In terms of biological role, catalyzes the hydrolytic cleavage of the carbon-nitrogen bond in imidazolone-5-propanoate to yield N-formimidoyl-L-glutamate. It is the third step in the universal histidine degradation pathway. The protein is Imidazolonepropionase of Bradyrhizobium diazoefficiens (strain JCM 10833 / BCRC 13528 / IAM 13628 / NBRC 14792 / USDA 110).